A 292-amino-acid chain; its full sequence is 33 kDa chaperonin (292 aa).

2 disulfides stabilise this stretch: cysteine 230/cysteine 232 and cysteine 263/cysteine 266.

The protein belongs to the HSP33 family. Under oxidizing conditions two disulfide bonds are formed involving the reactive cysteines. Under reducing conditions zinc is bound to the reactive cysteines and the protein is inactive.

It is found in the cytoplasm. In terms of biological role, redox regulated molecular chaperone. Protects both thermally unfolding and oxidatively damaged proteins from irreversible aggregation. Plays an important role in the bacterial defense system toward oxidative stress. The chain is 33 kDa chaperonin from Cronobacter sakazakii (strain ATCC BAA-894) (Enterobacter sakazakii).